A 431-amino-acid chain; its full sequence is Na(+)-translocating NADH-quinone reductase subunit F (431 aa).

The chain crosses the membrane as a helical span at residues 10–30; it reads ISIASLVFCVIGLILSGIILI. The 2Fe-2S ferredoxin-type domain occupies 41-133; sequence CKLKINDDDS…DMCLEIEERY (93 aa). The [2Fe-2S] cluster site is built by cysteine 76, cysteine 82, cysteine 85, and cysteine 117. The FAD-binding FR-type domain occupies 136-286; the sequence is ASSWEGTVVS…SGPYGESFMK (151 aa).

Belongs to the NqrF family. In terms of assembly, composed of six subunits; NqrA, NqrB, NqrC, NqrD, NqrE and NqrF. [2Fe-2S] cluster serves as cofactor. It depends on FAD as a cofactor.

The protein localises to the cell inner membrane. It catalyses the reaction a ubiquinone + n Na(+)(in) + NADH + H(+) = a ubiquinol + n Na(+)(out) + NAD(+). Functionally, NQR complex catalyzes the reduction of ubiquinone-1 to ubiquinol by two successive reactions, coupled with the transport of Na(+) ions from the cytoplasm to the periplasm. The first step is catalyzed by NqrF, which accepts electrons from NADH and reduces ubiquinone-1 to ubisemiquinone by a one-electron transfer pathway. The chain is Na(+)-translocating NADH-quinone reductase subunit F from Chlamydia caviae (strain ATCC VR-813 / DSM 19441 / 03DC25 / GPIC) (Chlamydophila caviae).